The primary structure comprises 364 residues: Probable dual-specificity RNA methyltransferase RlmN (364 aa).

E107 functions as the Proton acceptor in the catalytic mechanism. The Radical SAM core domain occupies 113-346 (HDYGNSVCVT…ATIRREQGSD (234 aa)). A disulfide bridge connects residues C120 and C351. Positions 127, 131, and 134 each coordinate [4Fe-4S] cluster. S-adenosyl-L-methionine contacts are provided by residues 177–178 (GE), S209, 232–234 (SLH), and N308. The active-site S-methylcysteine intermediate is the C351.

This sequence belongs to the radical SAM superfamily. RlmN family. [4Fe-4S] cluster is required as a cofactor.

It localises to the cytoplasm. The catalysed reaction is adenosine(2503) in 23S rRNA + 2 reduced [2Fe-2S]-[ferredoxin] + 2 S-adenosyl-L-methionine = 2-methyladenosine(2503) in 23S rRNA + 5'-deoxyadenosine + L-methionine + 2 oxidized [2Fe-2S]-[ferredoxin] + S-adenosyl-L-homocysteine. The enzyme catalyses adenosine(37) in tRNA + 2 reduced [2Fe-2S]-[ferredoxin] + 2 S-adenosyl-L-methionine = 2-methyladenosine(37) in tRNA + 5'-deoxyadenosine + L-methionine + 2 oxidized [2Fe-2S]-[ferredoxin] + S-adenosyl-L-homocysteine. Functionally, specifically methylates position 2 of adenine 2503 in 23S rRNA and position 2 of adenine 37 in tRNAs. Confers resistance to some classes of antibiotics. In Staphylococcus aureus (strain Mu3 / ATCC 700698), this protein is Probable dual-specificity RNA methyltransferase RlmN.